Here is a 311-residue protein sequence, read N- to C-terminus: tRNA-cytidine(32) 2-sulfurtransferase (311 aa).

Positions 47–52 match the PP-loop motif motif; the sequence is SGGKDS. Positions 122, 125, and 213 each coordinate [4Fe-4S] cluster.

It belongs to the TtcA family. In terms of assembly, homodimer. Mg(2+) serves as cofactor. The cofactor is [4Fe-4S] cluster.

Its subcellular location is the cytoplasm. The catalysed reaction is cytidine(32) in tRNA + S-sulfanyl-L-cysteinyl-[cysteine desulfurase] + AH2 + ATP = 2-thiocytidine(32) in tRNA + L-cysteinyl-[cysteine desulfurase] + A + AMP + diphosphate + H(+). The protein operates within tRNA modification. Its function is as follows. Catalyzes the ATP-dependent 2-thiolation of cytidine in position 32 of tRNA, to form 2-thiocytidine (s(2)C32). The sulfur atoms are provided by the cysteine/cysteine desulfurase (IscS) system. The sequence is that of tRNA-cytidine(32) 2-sulfurtransferase from Escherichia coli O157:H7.